The chain runs to 332 residues: Phosphoribosylformylglycinamidine cyclo-ligase (332 aa).

Belongs to the AIR synthase family.

The protein localises to the cytoplasm. The catalysed reaction is 2-formamido-N(1)-(5-O-phospho-beta-D-ribosyl)acetamidine + ATP = 5-amino-1-(5-phospho-beta-D-ribosyl)imidazole + ADP + phosphate + H(+). It functions in the pathway purine metabolism; IMP biosynthesis via de novo pathway; 5-amino-1-(5-phospho-D-ribosyl)imidazole from N(2)-formyl-N(1)-(5-phospho-D-ribosyl)glycinamide: step 2/2. In Clostridium acetobutylicum (strain ATCC 824 / DSM 792 / JCM 1419 / IAM 19013 / LMG 5710 / NBRC 13948 / NRRL B-527 / VKM B-1787 / 2291 / W), this protein is Phosphoribosylformylglycinamidine cyclo-ligase.